Consider the following 695-residue polypeptide: MAP kinase phosphatase with leucine-rich repeats protein 2 (695 aa).

LRR repeat units follow at residues 101-122 (SLKSLILDFNKITEIPDCITLL), 124-145 (NLNHLSLAANQLTHVPEFLSQL), 147-167 (SLETFEIGINQFTCFPLNVCK), 170-191 (SLTSLHLETNNIKSLPEEFLNL), 193-214 (NLKDLSLFDNQLKEIPDSLPNN), 215-235 (IEKLNLGCNDISSSKSDSLIR), 239-260 (SLTTLNLSENKIEELDESLSCL), 262-283 (NVKTLMLDCNMIKVIPGSVLGS), 286-307 (SLVTLNLPHNLISDLPPEVILL), and 309-330 (NLRIIDLRGNNFENCKKLIPTE). The segment covering 413-426 (SENNEINENNQLLT) has biased composition (low complexity). Disordered regions lie at residues 413-438 (SENNEINENNQLLTTDDDYNTDKNDS) and 492-519 (QEQLPQSKPENEKLTNIPEQQQKQQQQQ). The region spanning 556–695 (VPDLIIDKLY…LKKFEKDLFK (140 aa)) is the Tyrosine-protein phosphatase domain. The active-site Phosphocysteine intermediate is the Cys-639.

This sequence belongs to the protein-tyrosine phosphatase family. Non-receptor class dual specificity subfamily.

It carries out the reaction O-phospho-L-tyrosyl-[protein] + H2O = L-tyrosyl-[protein] + phosphate. The enzyme catalyses O-phospho-L-seryl-[protein] + H2O = L-seryl-[protein] + phosphate. It catalyses the reaction O-phospho-L-threonyl-[protein] + H2O = L-threonyl-[protein] + phosphate. Its function is as follows. Probable phosphatase with dual specificity toward Ser/Thr and Tyr-containing proteins. The chain is MAP kinase phosphatase with leucine-rich repeats protein 2 (mpl2) from Dictyostelium discoideum (Social amoeba).